A 366-amino-acid polypeptide reads, in one-letter code: Chorismate synthase (366 aa).

NADP(+) contacts are provided by Arg48 and Arg54. Residues 125–127 (RSS), 238–239 (NA), Gly278, 293–297 (KPTSS), and Arg319 each bind FMN.

Belongs to the chorismate synthase family. Homotetramer. Requires FMNH2 as cofactor.

It catalyses the reaction 5-O-(1-carboxyvinyl)-3-phosphoshikimate = chorismate + phosphate. The protein operates within metabolic intermediate biosynthesis; chorismate biosynthesis; chorismate from D-erythrose 4-phosphate and phosphoenolpyruvate: step 7/7. Functionally, catalyzes the anti-1,4-elimination of the C-3 phosphate and the C-6 proR hydrogen from 5-enolpyruvylshikimate-3-phosphate (EPSP) to yield chorismate, which is the branch point compound that serves as the starting substrate for the three terminal pathways of aromatic amino acid biosynthesis. This reaction introduces a second double bond into the aromatic ring system. In Paraburkholderia phymatum (strain DSM 17167 / CIP 108236 / LMG 21445 / STM815) (Burkholderia phymatum), this protein is Chorismate synthase.